The sequence spans 343 residues: Dihydroorotase (343 aa).

H14 and H16 together coordinate Zn(2+). Substrate contacts are provided by residues 16–18 (HLR) and N42. Zn(2+) is bound by residues K97, H136, H170, and D242. N6-carboxylysine is present on K97. Residue H136 participates in substrate binding. D242 is a catalytic residue. The substrate site is built by H246 and A258.

The protein belongs to the metallo-dependent hydrolases superfamily. DHOase family. Class II DHOase subfamily. As to quaternary structure, homodimer. It depends on Zn(2+) as a cofactor.

It carries out the reaction (S)-dihydroorotate + H2O = N-carbamoyl-L-aspartate + H(+). It participates in pyrimidine metabolism; UMP biosynthesis via de novo pathway; (S)-dihydroorotate from bicarbonate: step 3/3. Functionally, catalyzes the reversible cyclization of carbamoyl aspartate to dihydroorotate. The sequence is that of Dihydroorotase from Helicobacter hepaticus (strain ATCC 51449 / 3B1).